Here is a 362-residue protein sequence, read N- to C-terminus: Serpentine receptor class delta-2 (362 aa).

7 consecutive transmembrane segments (helical) span residues 27–47 (LSCL…YLIW), 57–77 (YAIY…ISFF), 104–124 (FCYF…WILL), 144–164 (LIRN…VYVF), 209–229 (LISI…ILYF), 264–284 (GIPI…FGII), and 292–312 (ITFR…IIFV).

It belongs to the nematode receptor-like protein srd family.

The protein resides in the membrane. In terms of biological role, thought to be a chemosensory receptor. In Caenorhabditis elegans, this protein is Serpentine receptor class delta-2 (srd-2).